The sequence spans 84 residues: uncharacterized protein (84 aa).

The protein belongs to the chlamydial CPn_0711/CT_665/TC_0036 family.

This is an uncharacterized protein from Chlamydia muridarum (strain MoPn / Nigg).